The sequence spans 102 residues: RNA-binding protein Hfq (102 aa).

Residues 9 to 68 (DPFLNALRRERVPVSIYLVNGIKLQGQIESFDQFVILLKNTVSQMVYKHAISTVVPSRPV) form the Sm domain. Positions 64 to 102 (PSRPVSHHSNTPSGGTSNYHHGNNPSAPQQPQQESDDAE) are disordered. Over residues 70-96 (HHSNTPSGGTSNYHHGNNPSAPQQPQQ) the composition is skewed to polar residues.

Belongs to the Hfq family. Homohexamer.

Functionally, RNA chaperone that binds small regulatory RNA (sRNAs) and mRNAs to facilitate mRNA translational regulation in response to envelope stress, environmental stress and changes in metabolite concentrations. Also binds with high specificity to tRNAs. This is RNA-binding protein Hfq from Serratia proteamaculans (strain 568).